Here is a 435-residue protein sequence, read N- to C-terminus: 5-methylthioadenosine/S-adenosylhomocysteine deaminase (435 aa).

Zn(2+) contacts are provided by H65 and H67. 3 residues coordinate substrate: E94, R150, and H189. Residue H216 participates in Zn(2+) binding. Positions 219 and 304 each coordinate substrate. D304 serves as a coordination point for Zn(2+).

The protein belongs to the metallo-dependent hydrolases superfamily. MTA/SAH deaminase family. Zn(2+) is required as a cofactor.

It catalyses the reaction S-adenosyl-L-homocysteine + H2O + H(+) = S-inosyl-L-homocysteine + NH4(+). The catalysed reaction is S-methyl-5'-thioadenosine + H2O + H(+) = S-methyl-5'-thioinosine + NH4(+). Functionally, catalyzes the deamination of 5-methylthioadenosine and S-adenosyl-L-homocysteine into 5-methylthioinosine and S-inosyl-L-homocysteine, respectively. Is also able to deaminate adenosine. The polypeptide is 5-methylthioadenosine/S-adenosylhomocysteine deaminase (Bacillus cereus (strain AH187)).